The chain runs to 470 residues: Ribulose bisphosphate carboxylase large chain (470 aa).

2 residues coordinate substrate: Asn-115 and Thr-165. Residue Lys-167 is the Proton acceptor of the active site. Lys-169 contributes to the substrate binding site. Lys-193, Asp-195, and Glu-196 together coordinate Mg(2+). At Lys-193 the chain carries N6-carboxylysine. His-286 serves as the catalytic Proton acceptor. Substrate-binding residues include Arg-287, His-319, and Ser-371.

The protein belongs to the RuBisCO large chain family. Type I subfamily. In terms of assembly, heterohexadecamer of 8 large chains and 8 small chains. Forms a CsoS2-CsoS1-RuBisCO complex. The cofactor is Mg(2+).

It is found in the carboxysome. The enzyme catalyses 2 (2R)-3-phosphoglycerate + 2 H(+) = D-ribulose 1,5-bisphosphate + CO2 + H2O. It carries out the reaction D-ribulose 1,5-bisphosphate + O2 = 2-phosphoglycolate + (2R)-3-phosphoglycerate + 2 H(+). In terms of biological role, ruBisCO catalyzes two reactions: the carboxylation of D-ribulose 1,5-bisphosphate, the primary event in carbon dioxide fixation, as well as the oxidative fragmentation of the pentose substrate in the photorespiration process. Both reactions occur simultaneously and in competition at the same active site. In Prochlorococcus marinus (strain MIT 9313), this protein is Ribulose bisphosphate carboxylase large chain.